Reading from the N-terminus, the 88-residue chain is Co-chaperonin GroES (88 aa).

This sequence belongs to the GroES chaperonin family. In terms of assembly, heptamer of 7 subunits arranged in a ring. Interacts with the chaperonin GroEL.

It is found in the cytoplasm. Functionally, together with the chaperonin GroEL, plays an essential role in assisting protein folding. The GroEL-GroES system forms a nano-cage that allows encapsulation of the non-native substrate proteins and provides a physical environment optimized to promote and accelerate protein folding. GroES binds to the apical surface of the GroEL ring, thereby capping the opening of the GroEL channel. The protein is Co-chaperonin GroES of Rubrobacter xylanophilus (strain DSM 9941 / JCM 11954 / NBRC 16129 / PRD-1).